An 871-amino-acid polypeptide reads, in one-letter code: MVNIKEKLFVYLHDPPDKALKIENHEERSKKILSSGNIQYSRTDKVKQADALSSKTQRFIIRTKENKEPVIDFLGRSSGKYFHVGYPVFIHPISTEIKRYETLEKYIDLGRSNRGERFVNEFLERVSKLEGDVLKEVFEDASNKFKGEESKQWAYIWQFYPVKLKEGVKEFAKSELKLKEEEAEKFAEEFVNLPADTRFPDHAIWTHLDLTSALSVKDPTLLRIKIVPVQPFIANSRKQLDLWASSHLLSMLMYKALEVIVDKFGPEHVIYPSLRDQPFFLKFYLGENIGDEILVANLPNKALAIVSGKEAEKIEEEIKKRIRDFLLQLYREAVDWAVENGVVKVDRSEKDSMLKEAYLKIVREYFTVSITWVSLSEKEDIYQVTENAGLSDEDVKKWLKFAEKKENSRVLERIAIYPLLVKILDSLGERKVTEERFEKSEQLKGWKCHVCGENLAIFGDMYDHDNLKSLWLDEEPLCPMCLIKRYYPVWIRSKTGQKIRFESVVDVALLYKNWRKIFDEKYGKDLVSKAREVSEDFVKDNMLVDSDLYYSSTWESGLSKKLKNKKEIDEEKVKEVVDFLNAAYKEIGNPPKYYAILVMDGDDMGKVISGEVLGEISTRIHPNIRDYVEIPEAKYYSTPQVHVAISQALANFSIREVRSVVKDEGLLIYAGGDDVLAILPVDKALEVAYKIRKEFGKSFENGSLLPGWKLSAGILIVHYKHPLYDALEKARDLLNNKAKNVPGKDTLAIGLLKRSGSYYISLVGWELIRVFYNSELRKKLLEEKGGVGKRFIYHVLREVDTWPKVGIDEMLKFEVIRHIRGRNKEETKELREKIYGEIKDLLEHVRGNNEVEKVRGLFTFLKIITDAEVFP.

Positions 1–215 (MVNIKEKLFV…THLDLTSALS (215 aa)) are not required for target RNA cleavage. Mn(2+)-binding residues include His-13, Asp-14, and His-25. Residues Cys-448, Cys-451, Cys-478, and Cys-481 each contribute to the Zn(2+) site. The 161-residue stretch at 592 to 752 (KYYAILVMDG…GKDTLAIGLL (161 aa)) folds into the GGDEF domain. Mn(2+) is bound by residues Asp-600, Glu-656, Asp-673, Asp-674, Glu-694, and Glu-700.

Belongs to the CRISPR system Cmr2 family. As to quaternary structure, part of the type III-B Cmr ribonucleoprotein (RNP) complex, an elongated RNP with Cmr2 and Cmr3 as the base, with Cmr4 and Cmr5 forming a helical core along the mature crRNA (39 or 45 nt in length), while the complex is capped by Cmr6 and Cmr1. The 5' end of the crRNA is bound to Cmr2 and Cmr3, while Cmr6 and a Cmr1 subunit (Cmr1-1 or Cmr1-2) cap the 3' end of the crRNA. The target RNA lies antiparallel to the crRNA, with its 5' end near Cmr1 and Cmr6 and its 3' end near Cmr2 and Cmr3; major target cleavage occurs nears the junction of Cmr1/Cmr6 and Cmr4/Cmr, with minor cleavage occurring at 6 nt intervals which coincide with the proposed spacing of Cmr4 subunits. Forms a 1:1 complex with Cmr3. The Cmr2-Cmr3 complex non-specifically binds ss-target RNA and crRNA. Interacts with Cmr3, Cmr4 and Cmr5. It depends on Ca(2+) as a cofactor. The cofactor is Mn(2+). Zn(2+) is required as a cofactor.

It is found in the cytoplasm. Functionally, CRISPR (clustered regularly interspaced short palindromic repeat), is an adaptive immune system that provides protection against mobile genetic elements (viruses, transposable elements and conjugative plasmids). CRISPR clusters contain sequences complementary to antecedent mobile elements and target invading nucleic acids. CRISPR clusters are transcribed and processed into CRISPR RNA (crRNA), formerly called psiRNA (prokaryotic silencing) in this organism. Part of the Cmr ribonucleoprotein complex which has divalent cation-dependent endoribonuclease activity specific for ssRNA complementary to the crRNA (target RNA), generating 5' hydroxy- and 3' phosphate or 2'-3' cyclic phosphate termini. Cmr4 is probably the subunit that cleaves target RNA. Cmr complex does not cleave ssDNA complementary to the crRNA. Cleavage of target RNA is guided by the crRNA; substrate cleavage occurs a fixed distance (14 nt) from the 3' end of the crRNA. In vitro reconstitution shows Cmr1-2 and Cmr5 are not absolutely necessary for target cleavage. In Pyrococcus furiosus (strain ATCC 43587 / DSM 3638 / JCM 8422 / Vc1), this protein is CRISPR system Cmr subunit Cmr2.